Reading from the N-terminus, the 100-residue chain is Osteocalcin (100 aa).

The first 23 residues, 1-23, serve as a signal peptide directing secretion; sequence MRALTLLALLALATLCITGQAGA. The propeptide occupies 24-51; that stretch reads KPSGAESSKGAAFVSKQEGSEVVKRPRR. One can recognise a Gla domain in the interval 52–98; sequence YLYQWLGAPAPYPDPLEPKREVCELNPDCDELADHIGFQEAYRRFYG. The residue at position 60 (P60) is a 4-hydroxyproline. Positions 68, 72, 75, and 81 each coordinate Ca(2+). E68, E72, and E75 each carry 4-carboxyglutamate. Residues C74 and C80 are joined by a disulfide bond.

This sequence belongs to the osteocalcin/matrix Gla protein family. In terms of processing, gamma-carboxyglutamate residues are formed by vitamin K dependent carboxylation by GGCX. These residues are essential for the binding of calcium. Decarboxylation promotes the hormone activity.

It is found in the secreted. In terms of biological role, the carboxylated form is one of the main organic components of the bone matrix, which constitutes 1-2% of the total bone protein: it acts as a negative regulator of bone formation and is required to limit bone formation without impairing bone resorption or mineralization. The carboxylated form binds strongly to apatite and calcium. Functionally, the uncarboxylated form acts as a hormone secreted by osteoblasts, which regulates different cellular processes, such as energy metabolism, male fertility and brain development. Regulates of energy metabolism by acting as a hormone favoring pancreatic beta-cell proliferation, insulin secretion and sensitivity and energy expenditure. Uncarboxylated osteocalcin hormone also promotes testosterone production in the testes: acts as a ligand for G protein-coupled receptor GPRC6A at the surface of Leydig cells, initiating a signaling response that promotes the expression of enzymes required for testosterone synthesis in a CREB-dependent manner. Also acts as a regulator of brain development: osteocalcin hormone crosses the blood-brain barrier and acts as a ligand for GPR158 on neurons, initiating a signaling response that prevents neuronal apoptosis in the hippocampus, favors the synthesis of all monoamine neurotransmitters and inhibits that of gamma-aminobutyric acid (GABA). Osteocalcin also crosses the placenta during pregnancy and maternal osteocalcin is required for fetal brain development. The sequence is that of Osteocalcin (BGLAP) from Macaca mulatta (Rhesus macaque).